Here is a 369-residue protein sequence, read N- to C-terminus: Saccharopine dehydrogenase [NAD(+), L-lysine-forming] (369 aa).

L-saccharopine contacts are provided by Arg-19 and Lys-78. Lys-78 functions as the Proton acceptor in the catalytic mechanism. The active-site Proton donor is His-96. Gln-101 contributes to the L-saccharopine binding site. Arg-130 contacts NAD(+). L-saccharopine is bound by residues Arg-131 and Phe-135. NAD(+)-binding positions include 203–204 (GR), Asp-227, Thr-231, Tyr-251, and Val-278. Cysteines 205 and 249 form a disulfide. 279–281 (SAD) is an L-saccharopine binding site. 318-321 (IDHL) serves as a coordination point for NAD(+).

The protein belongs to the AlaDH/PNT family. In terms of assembly, monomer.

It carries out the reaction L-saccharopine + NAD(+) + H2O = L-lysine + 2-oxoglutarate + NADH + H(+). It functions in the pathway amino-acid biosynthesis; L-lysine biosynthesis via AAA pathway; L-lysine from L-alpha-aminoadipate (fungal route): step 3/3. Catalyzes the NAD(+)-dependent cleavage of saccharopine to L-lysine and 2-oxoglutarate, the final step in the alpha-aminoadipate (AAA) pathway for lysin biosynthesis. The chain is Saccharopine dehydrogenase [NAD(+), L-lysine-forming] from Yarrowia lipolytica (strain CLIB 122 / E 150) (Yeast).